A 152-amino-acid chain; its full sequence is Small ribosomal subunit protein uS11B (152 aa).

Positions 131–152 (EDVTPIPSDSTRRKGGRRGRRL) are disordered. Positions 143–152 (RKGGRRGRRL) are enriched in basic residues.

This sequence belongs to the universal ribosomal protein uS11 family.

The polypeptide is Small ribosomal subunit protein uS11B (Anopheles gambiae (African malaria mosquito)).